We begin with the raw amino-acid sequence, 193 residues long: dCTP deaminase (193 aa).

DCTP-binding positions include 110–115, Asp128, 136–138, Tyr171, Lys178, and Gln182; these read RSSLAR and VLE. Residue Glu138 is the Proton donor/acceptor of the active site. Residues 169-193 form a disordered region; the sequence is RPYNRRQDAKYRDQQGAVASRIDKD.

This sequence belongs to the dCTP deaminase family. In terms of assembly, homotrimer.

It catalyses the reaction dCTP + H2O + H(+) = dUTP + NH4(+). It participates in pyrimidine metabolism; dUMP biosynthesis; dUMP from dCTP (dUTP route): step 1/2. In terms of biological role, catalyzes the deamination of dCTP to dUTP. This is dCTP deaminase from Cronobacter sakazakii (strain ATCC BAA-894) (Enterobacter sakazakii).